Here is a 787-residue protein sequence, read N- to C-terminus: ISWI one complex protein 3 (787 aa).

Residues 1–22 show a composition bias toward polar residues; it reads MDSPSNSIQNLQQEAQGSSSAQ. Disordered regions lie at residues 1–137, 672–693, and 749–787; these read MDSP…AHEQ, ILEQ…LPKD, and TEYD…RQRT. Positions 40–50 are enriched in low complexity; it reads DQSVSVSQSSD. Residues 79 to 92 show a composition bias toward basic residues; sequence KPKRKRPAPPKKKA. The segment covering 100 to 137 has biased composition (basic and acidic residues); sequence SNDKVEKKKTTSIAKDGKPTLKTNDKKVAPKPKPAHEQ. The segment covering 675-689 has biased composition (polar residues); it reads QKSTTDNNPSINTNP. The span at 751–777 shows a compositional bias: acidic residues; the sequence is YDSEEYVDDEEDDEADIYDDNDNDSSF. The segment covering 778–787 has biased composition (basic and acidic residues); it reads DDGRVKRQRT.

As to quaternary structure, component of the ISW1A complex, which at least consists of ISW1 and IOC3.

Its subcellular location is the nucleus. Functions as a component of the ISW1A complex, which acts in remodeling the chromatin by catalyzing an ATP-dependent alteration in the structure of nucleosomal DNA. The ISW1A complex represses gene expression at initiation through specific positioning of a promoter proximal dinucleosome. This Saccharomyces cerevisiae (strain ATCC 204508 / S288c) (Baker's yeast) protein is ISWI one complex protein 3 (IOC3).